A 793-amino-acid polypeptide reads, in one-letter code: DnaJ homolog subfamily C member 10 (793 aa).

The signal sequence occupies residues Met1 to Thr32. The region spanning Asp35–Gly100 is the J domain. Residues Glu130–His232 enclose the Thioredoxin 1 domain. Cys158 and Cys161 are oxidised to a cystine. Trxb regions lie at residues Ser235 to Phe350 and Pro348 to Phe463. 3 consecutive Thioredoxin domains span residues His454–Leu553, Ser557–Ile662, and Val671–Lys778. Cysteines 480 and 483 form a disulfide. An N-linked (GlcNAc...) asparagine glycan is attached at Asn530. 2 disulfides stabilise this stretch: Cys588/Cys591 and Cys700/Cys703. Positions Lys790 to Leu793 match the Prevents secretion from ER motif.

Interacts with HSPA5 (via its J domain). Interacts with EDEM1.

The protein localises to the endoplasmic reticulum lumen. In terms of biological role, endoplasmic reticulum disulfide reductase involved both in the correct folding of proteins and degradation of misfolded proteins. Required for efficient folding of proteins in the endoplasmic reticulum by catalyzing the removal of non-native disulfide bonds formed during the folding of proteins, such as LDLR. Also involved in endoplasmic reticulum-associated degradation (ERAD) by reducing incorrect disulfide bonds in misfolded glycoproteins recognized by EDEM1. Interaction with HSPA5 is required its activity, not for the disulfide reductase activity, but to facilitate the release of DNAJC10 from its substrate. Promotes apoptotic signaling pathway in response to endoplasmic reticulum stress. In Pongo abelii (Sumatran orangutan), this protein is DnaJ homolog subfamily C member 10 (DNAJC10).